Here is a 376-residue protein sequence, read N- to C-terminus: 4-hydroxy-3-methylbut-2-en-1-yl diphosphate synthase (flavodoxin) (376 aa).

Residues Cys-270, Cys-273, Cys-305, and Glu-312 each coordinate [4Fe-4S] cluster.

It belongs to the IspG family. [4Fe-4S] cluster serves as cofactor.

The catalysed reaction is (2E)-4-hydroxy-3-methylbut-2-enyl diphosphate + oxidized [flavodoxin] + H2O + 2 H(+) = 2-C-methyl-D-erythritol 2,4-cyclic diphosphate + reduced [flavodoxin]. It functions in the pathway isoprenoid biosynthesis; isopentenyl diphosphate biosynthesis via DXP pathway; isopentenyl diphosphate from 1-deoxy-D-xylulose 5-phosphate: step 5/6. Functionally, converts 2C-methyl-D-erythritol 2,4-cyclodiphosphate (ME-2,4cPP) into 1-hydroxy-2-methyl-2-(E)-butenyl 4-diphosphate. The polypeptide is 4-hydroxy-3-methylbut-2-en-1-yl diphosphate synthase (flavodoxin) (Colwellia psychrerythraea (strain 34H / ATCC BAA-681) (Vibrio psychroerythus)).